Reading from the N-terminus, the 872-residue chain is Potassium voltage-gated channel subfamily KQT member 3 (872 aa).

The interval 1 to 43 (MGLKARRAAGAAGGGGDGGGGGGGAANPAGGDAAAAGDEERKV) is disordered. Residues 1–120 (MGLKARRAAG…IYDALERPRG (120 aa)) are Cytoplasmic-facing. The segment covering 11–25 (AAGGGGDGGGGGGGA) has biased composition (gly residues). Low complexity predominate over residues 26-36 (ANPAGGDAAAA). A Phosphothreonine modification is found at Thr-81. Residues 121-143 (WALLYHALVFLIVLGCLILAVLT) traverse the membrane as a helical segment. The Extracellular portion of the chain corresponds to 144 to 153 (TFKEYETVSG). A helical transmembrane segment spans residues 154 to 175 (DWLLLLETFAIFIFGAEFALRI). Residues 176–193 (WAAGCCCRYKGWRGRLKF) lie on the Cytoplasmic side of the membrane. Residues 194-213 (ARKPLCMLDIFVLIASVPVV) traverse the membrane as a helical segment. The Extracellular portion of the chain corresponds to 214 to 225 (AVGNQGNVLATS). Residues 226–244 (LRSLRFLQILRMLRMDRRG) traverse the membrane as a helical; Voltage-sensor segment. An a 1,2-diacyl-sn-glycero-3-phospho-(1D-myo-inositol-4,5-bisphosphate)-binding site is contributed by Arg-243. The Cytoplasmic portion of the chain corresponds to 245 to 256 (GTWKLLGSAICA). Residue Thr-246 is modified to Phosphothreonine. A helical membrane pass occupies residues 257–282 (HSKELITAWYIGFLTLILSSFLVYLV). Lys-259 contacts a 1,2-diacyl-sn-glycero-3-phospho-(1D-myo-inositol-4,5-bisphosphate). Over 283-302 (EKDVPEVDAQGEEMKEEFET) the chain is Extracellular. An intramembrane region (pore-forming) is located at residues 303–315 (YADALWWGLITLA). The Selectivity filter signature appears at 316-321 (TIGYGD). Over 316-326 (TIGYGDKTPKT) the chain is Extracellular. Residues 327–353 (WEGRLIAATFSLIGVSFFALPAGILGS) traverse the membrane as a helical segment. At 354–872 (GLALKVQEQH…SVWTPSNKPI (519 aa)) the chain is on the cytoplasmic side. The tract at residues 356 to 537 (ALKVQEQHRQ…RLYKKKFKET (182 aa)) is mediates interaction with calmodulin. A 1,2-diacyl-sn-glycero-3-phospho-(1D-myo-inositol-4,5-bisphosphate) is bound at residue Lys-366. 2 disordered regions span residues 575-611 (GPPS…PSTS) and 764-872 (ADLQ…NKPI). Composition is skewed to polar residues over residues 587 to 600 (KGSA…QSPR) and 843 to 872 (DPFT…NKPI).

The protein belongs to the potassium channel family. KQT (TC 1.A.1.15) subfamily. Kv7.3/KCNQ3 sub-subfamily. Heterotetramer with KCNQ2; forms heterotetrameric native M-channel responsible for the M-current. Interacts with calmodulin; the interaction is calcium-independent, constitutive and participates in the proper assembly of a functional M-channel. Heteromultimer with KCNQ5. May associate with KCNE2. Interacts with IQCJ-SCHIP1. Interacts (via the pore module) with SLC5A3/SMIT1; forms a coregulatory complex that alters ion selectivity, voltage dependence and gating kinetics of the channel. In terms of processing, KCNQ2/KCNQ3 are ubiquitinated by NEDD4L. Ubiquitination leads to protein degradation. Degradation induced by NEDD4L is inhibited by USP36. As to expression, predominantly expressed in brain.

The protein localises to the cell membrane. The catalysed reaction is K(+)(in) = K(+)(out). It catalyses the reaction Rb(+)(in) = Rb(+)(out). The enzyme catalyses Cs(+)(in) = Cs(+)(out). It carries out the reaction Na(+)(in) = Na(+)(out). Its activity is regulated as follows. Phosphatidylinositol-4,5-bisphosphate (PIP2) potentiates the activation of KCNQ channels by enhancing the electro-mechanical coupling of the voltage-sensing domain (VSD) and the pore-forming domain (PD). In the closed state of the channel, PIP2 is anchored at the S2-S3 loop; upon channel activation, PIP2 interacts with the S4-S5 linker and is involved in channel gating. Calcium suppresses KCNQ2-KCNQ3 channel currents, with calcium-bound calmodulin inducing a change in channel configuration which leads to the reduction of channel affinity for PIP2 and subsequent current suppression. M-channel is activated by the anticonvulsant retigabine. Its function is as follows. Pore-forming subunit of the voltage-gated potassium (Kv) M-channel which is responsible for the M-current, a key controller of neuronal excitability. M-channel is composed of pore-forming subunits KCNQ2 and KCNQ3 assembled as heterotetramers. The native M-current has a slowly activating and deactivating potassium conductance which plays a critical role in determining the subthreshold electrical excitability of neurons as well as the responsiveness to synaptic inputs. M-channel is selectively permeable in vitro to other cations besides potassium, in decreasing order of affinity K(+) &gt; Rb(+) &gt; Cs(+) &gt; Na(+). M-channel association with SLC5A3/SMIT1 alters channel ion selectivity, increasing Na(+) and Cs(+) permeation relative to K(+). Suppressed by activation of M1 muscarinic acetylcholine receptors. KCNQ3 also associates with KCNQ5 to form a functional channel in vitro and may also contribute to the M-current in brain. The protein is Potassium voltage-gated channel subfamily KQT member 3 of Homo sapiens (Human).